Here is an 841-residue protein sequence, read N- to C-terminus: mRNA export factor ICP27 homolog (841 aa).

2 disordered regions span residues 12-82 and 115-163; these read PFAG…QYDK and RAQG…TSPD. Positions 32 to 49 are enriched in low complexity; sequence YSQQQSQHYYYGHNQSSY. Residues 66 to 79 are compositionally biased toward pro residues; sequence MPPPLSSPSSPPPQ. Positions 132–147 are enriched in low complexity; that stretch reads SSLVSSNNSNNNTTLS. Zn(2+) is bound by residues cysteine 298, histidine 411, cysteine 413, and cysteine 418. The CHC2-type zinc finger occupies 298 to 418; sequence CLLDSPGGGG…PGHRCQNEIC (121 aa). Disordered stretches follow at residues 444–749 and 774–811; these read HPNG…DDLH and SVTP…TDQP. Basic and acidic residues predominate over residues 495–507; sequence VDSRGGGGDRRGD. Residues 514–526 show a composition bias toward basic residues; it reads NHHRHHTRRARTR. The segment covering 553–563 has biased composition (basic and acidic residues); the sequence is RRGEAQRESNG. Composition is skewed to low complexity over residues 568 to 579 and 591 to 603; these read KSPSTVSSTTVH and SRKS…QPET. A compositionally biased stretch (pro residues) spans 614–623; it reads MPPPPSPCSP. Basic and acidic residues predominate over residues 641–657; it reads RPHDPPSGEPADAEKEL. The segment covering 688–699 has biased composition (low complexity); it reads DSSSSSSDSSSS. Over residues 708 to 731 the composition is skewed to basic and acidic residues; it reads EDCRELDLQSKRLEEALEERCERD. Composition is skewed to acidic residues over residues 732-749 and 793-809; these read FEAD…DDLH and DAEE…DETD.

It belongs to the HHV-1 ICP27 protein family.

It localises to the virion tegument. Its subcellular location is the virion. The protein localises to the host nucleus. The protein resides in the host cytoplasm. Immediate early (EI) protein that plays many roles during productive infection including regulation of viral gene expression and nuclear export of intronless viral RNAs. The sequence is that of mRNA export factor ICP27 homolog from Mus musculus (Mouse).